A 394-amino-acid polypeptide reads, in one-letter code: MIKLCREVWIEVNLDAVKKNLRAIRRHIPHKSKIMAVVKANGYGHGSIEVARHALEHGASELAVASVEEGIVLRKAGITAPILVLGFTSLSCVKKSAAWNITLSAFQVDWMKEANEILEKEASANRLAIHINVDTGMGRLGVRTKEELLEVVKALKASKFLRWTGIFTHFSTADEPDTTLTKLQHEKFISFLSFLKKQGIELPTVHMCNTAAAIAFPEFSADMIRLGIGLYGLYPSAYIKQLNLVKLEPALSLKARIAYVKTMRTEPRTVSYGATYIAEPNEVIATLPIGYADGYSRALSNRGFVLHRGKRVPVAGRVTMDMIMVSLGENGEGKQGDEVVIYGKQKGAEISVDEVAEMLNTINYEVVSTLSRRIPRFYIRDGEIFKVSTPVLYV.

Residue Lys-39 is the Proton acceptor; specific for D-alanine of the active site. Residue Lys-39 is modified to N6-(pyridoxal phosphate)lysine. A substrate-binding site is contributed by Arg-139. The Proton acceptor; specific for L-alanine role is filled by Tyr-272. A substrate-binding site is contributed by Met-320.

It belongs to the alanine racemase family. Requires pyridoxal 5'-phosphate as cofactor.

It catalyses the reaction L-alanine = D-alanine. It functions in the pathway amino-acid biosynthesis; D-alanine biosynthesis; D-alanine from L-alanine: step 1/1. Catalyzes the interconversion of L-alanine and D-alanine. May also act on other amino acids. The protein is Alanine racemase 2 (alr2) of Bacillus subtilis (strain 168).